Here is a 123-residue protein sequence, read N- to C-terminus: Thioredoxin domain-containing protein 17 (123 aa).

Ala-2 carries the N-acetylalanine modification. Residues 41–123 enclose the Thioredoxin domain; sequence SWCPDCVEAE…SLVEMIFSED (83 aa). Residues Cys-43 and Cys-46 each act as nucleophile in the active site. Cys-43 and Cys-46 are oxidised to a cystine.

It belongs to the thioredoxin family. As to quaternary structure, interacts with TRXR1 and DYNLL1/DNCL1. The oxidized protein is reduced by TRXR1.

The protein localises to the cytoplasm. In terms of biological role, disulfide reductase. May participate in various redox reactions through the reversible oxidation of its active center dithiol to a disulfide and catalyze dithiol-disulfide exchange reactions. Modulates TNF-alpha signaling and NF-kappa-B activation. Has peroxidase activity and may contribute to the elimination of cellular hydrogen peroxide. The protein is Thioredoxin domain-containing protein 17 (Txndc17) of Mus musculus (Mouse).